Here is a 617-residue protein sequence, read N- to C-terminus: V-type proton ATPase catalytic subunit A (617 aa).

Phosphothreonine is present on Thr136. 250 to 257 (GAFGCGKT) is a binding site for ATP. The residue at position 384 (Ser384) is a Phosphoserine; by AMPK.

The protein belongs to the ATPase alpha/beta chains family. In terms of assembly, V-ATPase is a heteromultimeric enzyme made up of two complexes: the ATP-hydrolytic V1 complex and the proton translocation V0 complex. The V1 complex consists of three catalytic AB heterodimers that form a heterohexamer, three peripheral stalks each consisting of EG heterodimers, one central rotor including subunits D and F, and the regulatory subunits C and H. The proton translocation complex V0 consists of the proton transport subunit a, a ring of proteolipid subunits c9c'', rotary subunit d, subunits e and f, and the accessory subunits ATP6AP1/Ac45 and ATP6AP2/PRR. Interacts with the V0 complex V-ATPase subunit a4 ATP6V0A4. Interacts with WFS1. Interacts with alpha-crystallin B chain/CRYAB and with MTOR, forming a ternary complex. Post-translationally, phosphorylation at Ser-384 by AMPK down-regulates its enzyme activity. In terms of tissue distribution, expressed in brain (at protein level).

It is found in the cytoplasm. The protein localises to the cytosol. Its subcellular location is the cytoplasmic vesicle. The protein resides in the secretory vesicle. It localises to the clathrin-coated vesicle membrane. It is found in the lysosome. It catalyses the reaction ATP + H2O + 4 H(+)(in) = ADP + phosphate + 5 H(+)(out). Its activity is regulated as follows. ATP hydrolysis occurs at the interface between the nucleotide-binding domains of subunits A and B. ATP hydrolysis triggers a conformational change in the subunits D and F, which induces a shift of subunit d. The c-ring is subsequently rotated and results in a continuous proton translocation across the membrane. The V-ATPase is inhibited by bafilomycin A. Catalytic subunit of the V1 complex of vacuolar(H+)-ATPase (V-ATPase), a multisubunit enzyme composed of a peripheral complex (V1) that hydrolyzes ATP and a membrane integral complex (V0) that translocates protons. V-ATPase is responsible for acidifying and maintaining the pH of intracellular compartments and in some cell types, is targeted to the plasma membrane, where it is responsible for acidifying the extracellular environment. In aerobic conditions, involved in intracellular iron homeostasis, thus triggering the activity of Fe(2+) prolyl hydroxylase (PHD) enzymes, and leading to HIF1A hydroxylation and subsequent proteasomal degradation. May play a role in neurite development and synaptic connectivity. This chain is V-type proton ATPase catalytic subunit A (ATP6V1A), found in Bos taurus (Bovine).